The following is a 179-amino-acid chain: Large ribosomal subunit protein uL5 (179 aa).

It belongs to the universal ribosomal protein uL5 family. As to quaternary structure, part of the 50S ribosomal subunit; part of the 5S rRNA/L5/L18/L25 subcomplex. Contacts the 5S rRNA and the P site tRNA. Forms a bridge to the 30S subunit in the 70S ribosome.

In terms of biological role, this is one of the proteins that bind and probably mediate the attachment of the 5S RNA into the large ribosomal subunit, where it forms part of the central protuberance. In the 70S ribosome it contacts protein S13 of the 30S subunit (bridge B1b), connecting the 2 subunits; this bridge is implicated in subunit movement. Contacts the P site tRNA; the 5S rRNA and some of its associated proteins might help stabilize positioning of ribosome-bound tRNAs. This chain is Large ribosomal subunit protein uL5, found in Buchnera aphidicola subsp. Baizongia pistaciae (strain Bp).